The primary structure comprises 193 residues: MLQNLVLAAAEEGAEHEDSVLVPPLAELIVGLLAFGLLVGFFFWKIYPQIRKTYAERAERIEGGLNRAERAEREAQALLEQYRSQLAEARSEAARIREDAQAQGRQIVEELRTQVQQEVAEIRERADAALVAERAQVVASVRREIGEIALELATRIVGRELENDTRQRQLVDDFIAGLDEAPQPDAVPAGPGV.

The helical transmembrane segment at 24–44 (PLAELIVGLLAFGLLVGFFFW) threads the bilayer.

Belongs to the ATPase B chain family. In terms of assembly, F-type ATPases have 2 components, F(1) - the catalytic core - and F(0) - the membrane proton channel. F(1) has five subunits: alpha(3), beta(3), gamma(1), delta(1), epsilon(1). F(0) has three main subunits: a(1), b(2) and c(10-14). The alpha and beta chains form an alternating ring which encloses part of the gamma chain. F(1) is attached to F(0) by a central stalk formed by the gamma and epsilon chains, while a peripheral stalk is formed by the delta and b chains.

The protein localises to the cell membrane. In terms of biological role, f(1)F(0) ATP synthase produces ATP from ADP in the presence of a proton or sodium gradient. F-type ATPases consist of two structural domains, F(1) containing the extramembraneous catalytic core and F(0) containing the membrane proton channel, linked together by a central stalk and a peripheral stalk. During catalysis, ATP synthesis in the catalytic domain of F(1) is coupled via a rotary mechanism of the central stalk subunits to proton translocation. Component of the F(0) channel, it forms part of the peripheral stalk, linking F(1) to F(0). This is ATP synthase subunit b from Parafrankia sp. (strain EAN1pec).